The following is a 504-amino-acid chain: MAMVKEKEQNTKDKKLLVGVIWNFSAELKLTFMALLVLCTLATLLPFIPSSFSLSTSDFRFCISRFSSAVPLNTTTTVEESSSSPSPEKNLDRVLDNGVIKRTFTGYGSAAYNFVSMSAYRGGVNSFAVIGLSSKPLHVYGHPSYRCEWVSLDPTQDPISTTGFKILTDWGYGRIYTTVVVNCTFSSISAVNPQNSGGTLILHATTGDPTLNLTDSISVLTEPPKSVDFDLYNSTKKTKKYDYLYCGSSLYGNLSPQRVREWIAYHVRFFGERSHFVLHDAGGIHEEVFEVLKPWIELGRVTLHDIRDQERFDGYYHNQFMIVNDCLHRYRFMTKWMFFFDVDEFLHVPVKETISSVMESLEEYSQFTIEQMPMSSRICYSGDGPARTYRKWGIEKLAYRDVKKVPRRDRKYAVQPENVFATGVHMSQNLQGKTYHKAESKIRYFHYHGSISQRREPCRQLFNDSRVVFENTPYVLDTTICDVGLAVRTFELRTIGDRLLRTRQ.

The helical transmembrane segment at 30-50 (LTFMALLVLCTLATLLPFIPS) threads the bilayer. The 215-residue stretch at 242-456 (DYLYCGSSLY…YHGSISQRRE (215 aa)) folds into the GT92 domain.

It belongs to the glycosyltransferase 92 family. Expressed in root caps, mature leaves, top of the stems and seeds.

The protein resides in the golgi apparatus membrane. In terms of biological role, involved in the biosynthesis of beta-1,4-galactan. Beta-1,4-galactans are abundant polysaccharides in plant cell walls and are found as side-chain of rhamnogalacturonan I, which is a major component of pectin. This Arabidopsis thaliana (Mouse-ear cress) protein is Galactan beta-1,4-galactosyltransferase GALS3.